The primary structure comprises 152 residues: Ribosome maturation factor RimP (152 aa).

Belongs to the RimP family.

Its subcellular location is the cytoplasm. Functionally, required for maturation of 30S ribosomal subunits. The protein is Ribosome maturation factor RimP of Clostridium beijerinckii (strain ATCC 51743 / NCIMB 8052) (Clostridium acetobutylicum).